Here is a 561-residue protein sequence, read N- to C-terminus: Transmembrane protein 209 (561 aa).

A phosphoserine mark is found at Ser9 and Ser11. A helical transmembrane segment spans residues 28–48; the sequence is VVLAWGLLNVSMAGMIYTEMT. A glycan (N-linked (GlcNAc...) asparagine) is linked at Asn57. Residues 60–80 form a helical membrane-spanning segment; it reads YWPLWYIELALASLFSLNALF. Ser98 bears the Phosphoserine mark. Disordered stretches follow at residues 120–156 and 196–233; these read LAATQISPSPPSPSIQGQSVLSYSPSRSPSTSPKFAT and SLSPSSPYPTTVGPVESSGLRARYRSPPTAYNSPTDKE. Over residues 138 to 152 the composition is skewed to low complexity; sequence SVLSYSPSRSPSTSP. Phosphoserine occurs at positions 201 and 248. The disordered stretch occupies residues 250-270; the sequence is EEKQHRVKLGSPDSTSPSTSP. Low complexity predominate over residues 260-270; that stretch reads SPDSTSPSTSP. Asn274 carries N-linked (GlcNAc...) asparagine glycosylation. A Phosphoserine modification is found at Ser278.

As to quaternary structure, interacts with NUP205.

It localises to the membrane. It is found in the nucleus envelope. The protein localises to the golgi apparatus. Its subcellular location is the cytoplasm. Nuclear envelope protein which in association with NUP205, may be involved in nuclear transport of various nuclear proteins in addition to MYC. In Rattus norvegicus (Rat), this protein is Transmembrane protein 209 (Tmem209).